The following is a 119-amino-acid chain: MSNIDKLNDHELVDLKRDIERELKRRAEGPKITTYYVVSCITDAQHFTDMDCALRCLKRVTEDLMEWVAESPENRDYVNRCTGIVGAKLQVEEMNLDHFNMCVAEKYFDDICYPPETAQ.

The polypeptide is Eaf protein (eaf) (Salmonella typhimurium (Bacteriophage P22)).